A 75-amino-acid polypeptide reads, in one-letter code: Putative UPF0377 protein YAL067W-A (75 aa).

This sequence belongs to the UPF0377 family.

This Saccharomyces cerevisiae (strain ATCC 204508 / S288c) (Baker's yeast) protein is Putative UPF0377 protein YAL067W-A.